We begin with the raw amino-acid sequence, 383 residues long: Heterogeneous nuclear rnp K-like protein 2 (383 aa).

KH domains lie at N58–V122, I161–I226, and Q256–L321. The tract at residues R332–E383 is disordered. The segment covering S343–A362 has biased composition (low complexity). Polar residues predominate over residues N363–E376.

Belongs to the HEK2 family. As to quaternary structure, binds RNA.

Its subcellular location is the cytoplasm. It localises to the P-body. The protein resides in the nucleus. It is found in the chromosome. The protein localises to the telomere. RNA-binding protein involved in the correct localization of transcripts in the cell. RNA localization is a widespread mechanism for achieving localized protein synthesis. Involved in structural and functional organization of telomeric chromatin and regulates silencing at the HMR locus. This Kluyveromyces lactis (strain ATCC 8585 / CBS 2359 / DSM 70799 / NBRC 1267 / NRRL Y-1140 / WM37) (Yeast) protein is Heterogeneous nuclear rnp K-like protein 2 (HEK2).